A 354-amino-acid polypeptide reads, in one-letter code: S-adenosylmethionine-dependent nucleotide dehydratase RSAD2 (354 aa).

The region spanning 62 to 282 (AMTPTSVNYH…LDRHSSISCL (221 aa)) is the Radical SAM core domain. 3 residues coordinate [4Fe-4S] cluster: Cys-76, Cys-80, and Cys-83.

Belongs to the radical SAM superfamily. RSAD2 family. [4Fe-4S] cluster is required as a cofactor. As to expression, constitutively expressed in spleen, head kidney and trunk kidney. Following viral infection, detected in most organs including liver, gill, intestine, heart, muscle and brain.

The protein resides in the endoplasmic reticulum membrane. Functionally, interferon-inducible iron-sulfur (4FE-4S) cluster-binding antiviral protein which plays a major role in the cell antiviral state induced by type I and type II interferon. This is S-adenosylmethionine-dependent nucleotide dehydratase RSAD2 from Siniperca chuatsi (Mandarin fish).